Consider the following 255-residue polypeptide: Fe(3+) dicitrate transport ATP-binding protein FecE (255 aa).

The region spanning 3-238 is the ABC transporter domain; the sequence is LRTENLTVSY…GLLRTVFSVE (236 aa). 35–42 is a binding site for ATP; it reads GPNGCGKS.

The protein belongs to the ABC transporter superfamily. The complex is composed of two ATP-binding proteins (FecE), two transmembrane proteins (FecC and FecD) and a solute-binding protein (FecB).

Its subcellular location is the cell inner membrane. The catalysed reaction is iron(III) dicitrate(out) + ATP + H2O = iron(III) dicitrate(in) + ADP + phosphate + H(+). Its function is as follows. Part of the ABC transporter complex FecBCDE involved in citrate-dependent Fe(3+) uptake. Binds ATP. Probably responsible for energy coupling to the transport system. The polypeptide is Fe(3+) dicitrate transport ATP-binding protein FecE (Escherichia coli (strain K12)).